The following is a 232-amino-acid chain: Putative caffeoyl-CoA O-methyltransferase At1g67980 (232 aa).

K8 provides a ligand contact to substrate. S-adenosyl-L-methionine contacts are provided by residues V52, E74, 76–77 (GV), S82, and D100. Substrate is bound at residue D149. Residue D149 participates in a divalent metal cation binding. D151 is a binding site for S-adenosyl-L-methionine. D175 and N176 together coordinate a divalent metal cation.

The protein belongs to the class I-like SAM-binding methyltransferase superfamily. Cation-dependent O-methyltransferase family. CCoAMT subfamily. Requires a divalent metal cation as cofactor.

The catalysed reaction is (E)-caffeoyl-CoA + S-adenosyl-L-methionine = (E)-feruloyl-CoA + S-adenosyl-L-homocysteine + H(+). The protein operates within aromatic compound metabolism; phenylpropanoid biosynthesis. Functionally, methylates caffeoyl-CoA to feruloyl-CoA and 5-hydroxyferuloyl-CoA to sinapoyl-CoA. Plays a role in the synthesis of feruloylated polysaccharides. Involved in the reinforcement of the plant cell wall. Also involved in the responding to wounding or pathogen challenge by the increased formation of cell wall-bound ferulic acid polymers. In Arabidopsis thaliana (Mouse-ear cress), this protein is Putative caffeoyl-CoA O-methyltransferase At1g67980.